A 566-amino-acid polypeptide reads, in one-letter code: MKAKLLVLLCALSATDADTICIGYHANNSTDTVDTVLEKNVTVTHSVNLLEDSHNGKLCRLKGIAPLQLGKCSIAGWILGNPECESLFSKKSWSYIAETPNSENGTCYPGYFADYEELREQLSSVSSFERFEIFPKERSWPKHNITRGVTASCSHKGKSSFYRNLLWLTEKNGSYPNLSKSYVNNKEKEVLVLWGVHHPSNIEDQKTIYRKENAYVSVVSSNYNRRFTPEIAKRPKVRGQEGRINYYWTLLEPGDTIIFEANGNLIAPWYAFALSRGFGSGIITSNASMDECDTKCQTPQGAINSSLPFQNVHPVTIGECPKYVRSTKLRMVTGLRNIPSIQSRGLFGAIAGFIEGGWTGMIDGWYGYHHQNEQGSGYAADQKSTQNAINGITNKVNSVIEKMNTQFTAVGKEFNKLEKRMENLNKKVDDGFLDIWTYNAELLVLLENERTLDFHDSNVKNLYEKVKSQLKNNAKEIGNGCFEFYHKCNNECMESVKNGTYDYPKYSEESKLNREKIDGVKLESMGVYQILAIYSTVASSLVLLVSLGAISFWMCSNGSLQCRICI.

A signal peptide spans Met1–Ala17. Topologically, residues Asp18 to Gln529 are extracellular. Disulfide bonds link Cys21–Cys481, Cys59–Cys292, Cys72–Cys84, Cys107–Cys153, Cys296–Cys320, and Cys488–Cys492. Residues Asn27, Asn28, and Asn40 are each glycosylated (N-linked (GlcNAc...) asparagine; by host). Residues Asn104, Asn144, Asn172, Asn177, Asn286, and Asn304 are each glycosylated (N-linked (GlcNAc...) asparagine; by host). Asn498 carries an N-linked (GlcNAc...) asparagine; by host glycan. Residues Ile530 to Ile550 traverse the membrane as a helical segment. The Cytoplasmic segment spans residues Ser551–Ile566. Residues Cys555, Cys562, and Cys565 are each lipidated (S-palmitoyl cysteine; by host).

Belongs to the influenza viruses hemagglutinin family. As to quaternary structure, homotrimer of disulfide-linked HA1-HA2. Interacts with human CACNA1C. In terms of processing, palmitoylated. In natural infection, inactive HA is matured into HA1 and HA2 outside the cell by one or more trypsin-like, arginine-specific endoprotease secreted by the bronchial epithelial cells. One identified protease that may be involved in this process is secreted in lungs by club cells.

The protein resides in the virion membrane. It is found in the host apical cell membrane. Its function is as follows. Binds to sialic acid-containing receptors on the cell surface, bringing about the attachment of the virus particle to the cell. This attachment induces virion internalization either through clathrin-dependent endocytosis or through clathrin- and caveolin-independent pathway. Plays a major role in the determination of host range restriction and virulence. Class I viral fusion protein. Responsible for penetration of the virus into the cell cytoplasm by mediating the fusion of the membrane of the endocytosed virus particle with the endosomal membrane. Low pH in endosomes induces an irreversible conformational change in HA2, releasing the fusion hydrophobic peptide. Several trimers are required to form a competent fusion pore. In Influenza A virus (strain A/Brazil/11/1978 H1N1), this protein is Hemagglutinin.